Here is a 197-residue protein sequence, read N- to C-terminus: Holliday junction branch migration complex subunit RuvA (197 aa).

The interval 1–63 (MYAYLKGIIT…EDAHLLYGFR (63 aa)) is domain I. Residues 64-142 (SEDEKKLFLS…VAGDDLPAKI (79 aa)) are domain II. Residues 143–147 (AVQAS) are flexible linker. The segment at 148–197 (AENQELEEAMEAMLALGYKATELKKIKKFFEGTTDTAENYIKSALKMLVK) is domain III.

Belongs to the RuvA family. In terms of assembly, homotetramer. Forms an RuvA(8)-RuvB(12)-Holliday junction (HJ) complex. HJ DNA is sandwiched between 2 RuvA tetramers; dsDNA enters through RuvA and exits via RuvB. An RuvB hexamer assembles on each DNA strand where it exits the tetramer. Each RuvB hexamer is contacted by two RuvA subunits (via domain III) on 2 adjacent RuvB subunits; this complex drives branch migration. In the full resolvosome a probable DNA-RuvA(4)-RuvB(12)-RuvC(2) complex forms which resolves the HJ.

The protein localises to the cytoplasm. In terms of biological role, the RuvA-RuvB-RuvC complex processes Holliday junction (HJ) DNA during genetic recombination and DNA repair, while the RuvA-RuvB complex plays an important role in the rescue of blocked DNA replication forks via replication fork reversal (RFR). RuvA specifically binds to HJ cruciform DNA, conferring on it an open structure. The RuvB hexamer acts as an ATP-dependent pump, pulling dsDNA into and through the RuvAB complex. HJ branch migration allows RuvC to scan DNA until it finds its consensus sequence, where it cleaves and resolves the cruciform DNA. This Streptococcus pneumoniae (strain Taiwan19F-14) protein is Holliday junction branch migration complex subunit RuvA.